The sequence spans 186 residues: UPF0200 protein Mbar_A0975 (186 aa).

ATP is bound at residue 8–15 (GMPASGKS).

The protein belongs to the UPF0200 family.

The polypeptide is UPF0200 protein Mbar_A0975 (Methanosarcina barkeri (strain Fusaro / DSM 804)).